A 629-amino-acid chain; its full sequence is tRNA uridine 5-carboxymethylaminomethyl modification enzyme MnmG (629 aa).

An FAD-binding site is contributed by 14 to 19 (GAGHAG). 274–288 (GPRYCPSIEDKVVRF) provides a ligand contact to NAD(+).

Belongs to the MnmG family. In terms of assembly, homodimer. Heterotetramer of two MnmE and two MnmG subunits. Requires FAD as cofactor.

It localises to the cytoplasm. Functionally, NAD-binding protein involved in the addition of a carboxymethylaminomethyl (cmnm) group at the wobble position (U34) of certain tRNAs, forming tRNA-cmnm(5)s(2)U34. In Xylella fastidiosa (strain Temecula1 / ATCC 700964), this protein is tRNA uridine 5-carboxymethylaminomethyl modification enzyme MnmG.